Reading from the N-terminus, the 513-residue chain is MQLNSTEISELIKKRIAQFNVVSEAQSTGTIVSVSDGIIRIHGLADVMQGEMIELPGNRYAIALNLERDSVGAVVMGPYADLAEGMTVKCTGRILEVPVGKGLLGRVVNTLGQPIDGKGEIDNDGFSPVEVIAPGVIDRQSVDQPVQTGYKAVDSMVPIGRGQRELIIGDRQTGKTSLVIDAIIAQRDSGIKCIYVAIGQKASTIANVVRKLEEHGALANTIVVVASASESAALQYLAPYSGCAMGEYFRDRGEDALIVYDDLSKQAVAYRQISLLLRRPPGREAFPGDVFYLHSRLLERAARVNAEYVERFTNGAVTGRTGSLTALPIIETQAGDVSAFVPTNVISITDGQIFLESSLFNSGIRPAVNPGISVSRVGSAAQTKVIKKLSGGIRTALAQYRELAAFAQFASDLDDATRKQLSHGQKVTELLKQKQFAPMPVSEQALVLFAAEFGYLDGVELERISSFESALLAYANSNHADFMKDLAKSGNFNDSIQQELKTIVENFKKNGAW.

169–176 (GDRQTGKT) is an ATP binding site.

It belongs to the ATPase alpha/beta chains family. As to quaternary structure, F-type ATPases have 2 components, CF(1) - the catalytic core - and CF(0) - the membrane proton channel. CF(1) has five subunits: alpha(3), beta(3), gamma(1), delta(1), epsilon(1). CF(0) has three main subunits: a(1), b(2) and c(9-12). The alpha and beta chains form an alternating ring which encloses part of the gamma chain. CF(1) is attached to CF(0) by a central stalk formed by the gamma and epsilon chains, while a peripheral stalk is formed by the delta and b chains.

Its subcellular location is the cell inner membrane. The catalysed reaction is ATP + H2O + 4 H(+)(in) = ADP + phosphate + 5 H(+)(out). Its function is as follows. Produces ATP from ADP in the presence of a proton gradient across the membrane. The alpha chain is a regulatory subunit. This Haemophilus ducreyi (strain 35000HP / ATCC 700724) protein is ATP synthase subunit alpha.